Consider the following 1154-residue polypeptide: CRISPR-associated endoribonuclease Cas13a (1154 aa).

2 HEPN-like fold regions span residues 330 to 466 (TTSN…RFIN) and 923 to 1154 (FVHL…EMKK).

The protein belongs to the CRISPR-associated endoribonuclease Cas13a family. A divalent metal cation serves as cofactor.

With respect to regulation, target RNA acts as an activator for non-specific ssRNA degradation. Functionally, CRISPR (clustered regularly interspaced short palindromic repeat), is an adaptive immune system that provides protection against mobile genetic elements (viruses, transposable elements and conjugative plasmids). CRISPR clusters contain sequences complementary to antecedent mobile elements and target invading nucleic acids. Unlike many single-component effectors, this CRISPR-Cas system targets RNA. CRISPR clusters are transcribed from pre-CRISPR RNA (crRNA) and processed into crRNA by this protein. Cleaves linear target ssRNA in a pre-crRNA-dependent fashion, preferentially before U residues. Binding a viable target RNA target activates this protein for non-specific RNA degradation in vitro (called collateral RNA degradation), which is fairly sensitive as it requires picomolar levels of viable target RNA. The chain is CRISPR-associated endoribonuclease Cas13a from Paludibacter propionicigenes (strain DSM 17365 / JCM 13257 / WB4).